We begin with the raw amino-acid sequence, 174 residues long: SUSHI domain-containing protein E3 (174 aa).

The N-terminal stretch at 1-20 (MATEVQFACALVVLLGCGYA) is a signal peptide. One can recognise a Sushi domain in the interval 35-97 (QNCTTYPSIE…WTNGPPSCVK (63 aa)). Intrachain disulfides connect C37/C78 and C64/C95. Residues 108–127 (STSTTPVTTGTFPDPQNTTH) are compositionally biased toward low complexity. Residues 108 to 133 (STSTTPVTTGTFPDPQNTTHPTHHTV) are disordered. The chain crosses the membrane as a helical span at residues 145 to 165 (FGYTPWAIITLVVIILLVVWI).

It is found in the host membrane. In Equine herpesvirus 2 (strain 86/87) (EHV-2), this protein is SUSHI domain-containing protein E3 (E3).